Reading from the N-terminus, the 139-residue chain is Holo-[acyl-carrier-protein] synthase (139 aa).

Mg(2+) is bound by residues D8 and E61.

Belongs to the P-Pant transferase superfamily. AcpS family. Requires Mg(2+) as cofactor.

The protein localises to the cytoplasm. The catalysed reaction is apo-[ACP] + CoA = holo-[ACP] + adenosine 3',5'-bisphosphate + H(+). In terms of biological role, transfers the 4'-phosphopantetheine moiety from coenzyme A to a Ser of acyl-carrier-protein. In Bradyrhizobium diazoefficiens (strain JCM 10833 / BCRC 13528 / IAM 13628 / NBRC 14792 / USDA 110), this protein is Holo-[acyl-carrier-protein] synthase.